Here is a 405-residue protein sequence, read N- to C-terminus: MTQSQYRPGPDANGLFGSFGGRYVAETLMPLVLDLAREYEAAKADPKFLEELAYFQRDYIGRPNPLYFAERLTEHCGGAKIFFKREELNHTGAHKVNNCIGQVLLAKRMGKKRLIAETGAGMHGVATATVAARFGLPCVIYMGATDIERQQANVFRMKLLGAEIVPVTAGTGTLKDAMNEALRDWVTNVEDTFYLIGTVAGPHPYPAMVRDFQSIIGKETRAQLQEKEGRLPDSLVACVGGGSNAMGLFHEFLEEPSVQIIGVEAGGHGVHTDKHAASLNGGVPGVLHGNRTYLLQDADGQITDAHSISAGLDYPGIGPEHAYLHEVKRVEYVSITDDEALDAFHATCRLEGIIPALESSHALAEAIKRAPKLPKDHLMVVCLSGRGDKDMQTVMNHMAAQEKQA.

Residue Lys95 is modified to N6-(pyridoxal phosphate)lysine.

This sequence belongs to the TrpB family. In terms of assembly, tetramer of two alpha and two beta chains. Requires pyridoxal 5'-phosphate as cofactor.

It carries out the reaction (1S,2R)-1-C-(indol-3-yl)glycerol 3-phosphate + L-serine = D-glyceraldehyde 3-phosphate + L-tryptophan + H2O. It participates in amino-acid biosynthesis; L-tryptophan biosynthesis; L-tryptophan from chorismate: step 5/5. Functionally, the beta subunit is responsible for the synthesis of L-tryptophan from indole and L-serine. This Pseudomonas putida (strain GB-1) protein is Tryptophan synthase beta chain.